A 431-amino-acid polypeptide reads, in one-letter code: Isocitrate lyase (431 aa).

Residues 1-21 are disordered; it reads MSNVGTPRTAQEIQQDWDTNP. 93–95 contributes to the substrate binding site; sequence SGW. Asp155 contacts Mg(2+). Cys193 serves as the catalytic Proton acceptor. Substrate contacts are provided by residues 194 to 195, Arg230, 315 to 319, and Thr349; these read GH and NCSPS.

It belongs to the isocitrate lyase/PEP mutase superfamily. Isocitrate lyase family. Homotetramer. Requires Mg(2+) as cofactor.

The catalysed reaction is D-threo-isocitrate = glyoxylate + succinate. Its pathway is carbohydrate metabolism; glyoxylate cycle; (S)-malate from isocitrate: step 1/2. Functionally, involved in the metabolic adaptation in response to environmental changes. Catalyzes the reversible formation of succinate and glyoxylate from isocitrate, a key step of the glyoxylate cycle, which operates as an anaplerotic route for replenishing the tricarboxylic acid cycle during growth on fatty acid substrates. This Corynebacterium efficiens (strain DSM 44549 / YS-314 / AJ 12310 / JCM 11189 / NBRC 100395) protein is Isocitrate lyase (aceA).